A 475-amino-acid polypeptide reads, in one-letter code: Cytosolic non-specific dipeptidase (475 aa).

Ser58 is modified (phosphoserine). Position 99 (His99) interacts with Mn(2+). Asp101 is an active-site residue. Asp132 serves as a coordination point for Mn(2+). Glu166 (proton acceptor) is an active-site residue. Residues 166–167 (EE), Asp195, and His228 each bind substrate. Mn(2+) contacts are provided by Glu167 and Asp195. Phosphoserine is present on Ser299. Positions 330, 343, 417, and 445 each coordinate substrate. Position 445 (His445) interacts with Mn(2+).

This sequence belongs to the peptidase M20A family. Homodimer. Mn(2+) is required as a cofactor. As to expression, highly expressed in the parafascicular nucleus of the thalamus, tuberomammillary nucleus of the hypothalamus and the mitral cell layer of the olfactory bulb.

The protein resides in the cytoplasm. The catalysed reaction is Hydrolysis of dipeptides, preferentially hydrophobic dipeptides including prolyl amino acids.. The enzyme catalyses L-threonyl-L-threonine + H2O = 2 L-threonine. It catalyses the reaction L-threonyl-L-serine + H2O = L-threonine + L-serine. It carries out the reaction L-seryl-L-threonine + H2O = L-threonine + L-serine. The catalysed reaction is L-cysteinylglycine + H2O = L-cysteine + glycine. The enzyme catalyses L-alanyl-L-cysteine + H2O = L-cysteine + L-alanine. It catalyses the reaction (S)-lactate + L-phenylalanine = N-[(S)-lactoyl]-L-phenylalanine + H2O. With respect to regulation, inhibited by bestatin. Functionally, catalyzes the peptide bond hydrolysis in dipeptides, displaying a non-redundant activity toward threonyl dipeptides. Mediates threonyl dipeptide catabolism in a tissue-specific way. Has high dipeptidase activity toward cysteinylglycine, an intermediate metabolite in glutathione metabolism. Metabolizes N-lactoyl-amino acids, both through hydrolysis to form lactic acid and amino acids, as well as through their formation by reverse proteolysis. Plays a role in the regulation of cell cycle arrest and apoptosis. This Mus musculus (Mouse) protein is Cytosolic non-specific dipeptidase (Cndp2).